Consider the following 65-residue polypeptide: DNA-directed RNA polymerase subunit omega (65 aa).

This sequence belongs to the RNA polymerase subunit omega family. In terms of assembly, the RNAP catalytic core consists of 2 alpha, 1 beta, 1 beta' and 1 omega subunit. When a sigma factor is associated with the core the holoenzyme is formed, which can initiate transcription.

The catalysed reaction is RNA(n) + a ribonucleoside 5'-triphosphate = RNA(n+1) + diphosphate. Functionally, promotes RNA polymerase assembly. Latches the N- and C-terminal regions of the beta' subunit thereby facilitating its interaction with the beta and alpha subunits. The chain is DNA-directed RNA polymerase subunit omega from Finegoldia magna (strain ATCC 29328 / DSM 20472 / WAL 2508) (Peptostreptococcus magnus).